We begin with the raw amino-acid sequence, 251 residues long: 3-deoxy-manno-octulosonate cytidylyltransferase (251 aa).

This sequence belongs to the KdsB family.

Its subcellular location is the cytoplasm. The catalysed reaction is 3-deoxy-alpha-D-manno-oct-2-ulosonate + CTP = CMP-3-deoxy-beta-D-manno-octulosonate + diphosphate. Its pathway is nucleotide-sugar biosynthesis; CMP-3-deoxy-D-manno-octulosonate biosynthesis; CMP-3-deoxy-D-manno-octulosonate from 3-deoxy-D-manno-octulosonate and CTP: step 1/1. The protein operates within bacterial outer membrane biogenesis; lipopolysaccharide biosynthesis. Activates KDO (a required 8-carbon sugar) for incorporation into bacterial lipopolysaccharide in Gram-negative bacteria. This Vibrio vulnificus (strain CMCP6) protein is 3-deoxy-manno-octulosonate cytidylyltransferase.